A 215-amino-acid chain; its full sequence is Octanoyltransferase (215 aa).

Residues 31 to 206 form the BPL/LPL catalytic domain; that stretch reads PESQDEVWLV…QLVRHLDYAE (176 aa). Substrate contacts are provided by residues 70–77, 137–139, and 150–152; these read RGGQVTYH, SLG, and GLA. Cys-168 functions as the Acyl-thioester intermediate in the catalytic mechanism.

This sequence belongs to the LipB family.

It localises to the cytoplasm. It catalyses the reaction octanoyl-[ACP] + L-lysyl-[protein] = N(6)-octanoyl-L-lysyl-[protein] + holo-[ACP] + H(+). Its pathway is protein modification; protein lipoylation via endogenous pathway; protein N(6)-(lipoyl)lysine from octanoyl-[acyl-carrier-protein]: step 1/2. Functionally, catalyzes the transfer of endogenously produced octanoic acid from octanoyl-acyl-carrier-protein onto the lipoyl domains of lipoate-dependent enzymes. Lipoyl-ACP can also act as a substrate although octanoyl-ACP is likely to be the physiological substrate. This is Octanoyltransferase from Pseudomonas entomophila (strain L48).